The following is a 287-amino-acid chain: ATP synthase gamma chain (287 aa).

The protein belongs to the ATPase gamma chain family. As to quaternary structure, F-type ATPases have 2 components, CF(1) - the catalytic core - and CF(0) - the membrane proton channel. CF(1) has five subunits: alpha(3), beta(3), gamma(1), delta(1), epsilon(1). CF(0) has three main subunits: a, b and c.

The protein localises to the cell inner membrane. Its function is as follows. Produces ATP from ADP in the presence of a proton gradient across the membrane. The gamma chain is believed to be important in regulating ATPase activity and the flow of protons through the CF(0) complex. The polypeptide is ATP synthase gamma chain (Cronobacter sakazakii (strain ATCC BAA-894) (Enterobacter sakazakii)).